The following is a 161-amino-acid chain: F-box only protein 48 (161 aa).

Residues methionine 1–arginine 25 form a disordered region. The region spanning arginine 32–histidine 79 is the F-box domain.

The polypeptide is F-box only protein 48 (Fbxo48) (Mus musculus (Mouse)).